A 194-amino-acid polypeptide reads, in one-letter code: ATP-dependent Clp protease proteolytic subunit (194 aa).

The Nucleophile role is filled by S98. Residue H123 is part of the active site.

It belongs to the peptidase S14 family. Fourteen ClpP subunits assemble into 2 heptameric rings which stack back to back to give a disk-like structure with a central cavity, resembling the structure of eukaryotic proteasomes.

Its subcellular location is the cytoplasm. The catalysed reaction is Hydrolysis of proteins to small peptides in the presence of ATP and magnesium. alpha-casein is the usual test substrate. In the absence of ATP, only oligopeptides shorter than five residues are hydrolyzed (such as succinyl-Leu-Tyr-|-NHMec, and Leu-Tyr-Leu-|-Tyr-Trp, in which cleavage of the -Tyr-|-Leu- and -Tyr-|-Trp bonds also occurs).. In terms of biological role, cleaves peptides in various proteins in a process that requires ATP hydrolysis. Has a chymotrypsin-like activity. Plays a major role in the degradation of misfolded proteins. The polypeptide is ATP-dependent Clp protease proteolytic subunit (Acetivibrio thermocellus (strain ATCC 27405 / DSM 1237 / JCM 9322 / NBRC 103400 / NCIMB 10682 / NRRL B-4536 / VPI 7372) (Clostridium thermocellum)).